Consider the following 313-residue polypeptide: Inner membrane ABC transporter permease protein YdcU (313 aa).

The Cytoplasmic segment spans residues 1–25 (MAMNVLQSPSRPGLGKVSGFFWHNP). A helical membrane pass occupies residues 26–46 (GLGLFLLLLGPLMWFGIVYFG). Residues 47–92 (SLLTLLWQGFYTFDDFTMSVTPELTLANIRALFNPANYDIILRTLT) lie on the Periplasmic side of the membrane. One can recognise an ABC transmembrane type-1 domain in the interval 87 to 302 (ILRTLTMAVA…PIILIALYLA (216 aa)). Residues 93–113 (MAVAVTIASAILAFPMAWYMA) traverse the membrane as a helical segment. Residues 114 to 122 (RYTSGKMKA) are Cytoplasmic-facing. The chain crosses the membrane as a helical span at residues 123–143 (FFYIAVMLPMWASYIVKAYAW). The Periplasmic segment spans residues 144–154 (TLLLAKDGVAQ). A helical membrane pass occupies residues 155 to 175 (WFLQHLGLEPLLTAFLTLPAV). The Cytoplasmic portion of the chain corresponds to 176-187 (GGNTLSTSGLGR). The chain crosses the membrane as a helical span at residues 188–208 (FLVFLYIWLPFMILPVQAALE). The Periplasmic segment spans residues 209 to 230 (RLPPSLLQASADLGARPRQTFR). The chain crosses the membrane as a helical span at residues 231–251 (YVVLPLAIPGIAAGSIFTFSL). Threonine 252 is a topological domain (cytoplasmic). A helical membrane pass occupies residues 253 to 273 (LGDFIVPQLVGPPGYFIGNMV). Residues 274–283 (YSQQGAIGNM) are Periplasmic-facing. A helical transmembrane segment spans residues 284-304 (PMAAAFTLVPIILIALYLAFV). At 305-313 (KRLGAFDAL) the chain is on the cytoplasmic side.

The protein belongs to the binding-protein-dependent transport system permease family. CysTW subfamily.

The protein localises to the cell inner membrane. Functionally, probably part of the ABC transporter complex YdcSTUV. Probably responsible for the translocation of the substrate across the membrane. The sequence is that of Inner membrane ABC transporter permease protein YdcU (ydcU) from Escherichia coli (strain K12).